The sequence spans 433 residues: Tol-Pal system protein TolB (433 aa).

Positions 1–21 (MRNLLRGMLVVICCMAGIAAA) are cleaved as a signal peptide.

It belongs to the TolB family. As to quaternary structure, the Tol-Pal system is composed of five core proteins: the inner membrane proteins TolA, TolQ and TolR, the periplasmic protein TolB and the outer membrane protein Pal. They form a network linking the inner and outer membranes and the peptidoglycan layer.

It localises to the periplasm. In terms of biological role, part of the Tol-Pal system, which plays a role in outer membrane invagination during cell division and is important for maintaining outer membrane integrity. The chain is Tol-Pal system protein TolB from Pseudomonas fluorescens (strain SBW25).